The following is a 524-amino-acid chain: RNA-binding protein 39 (524 aa).

The tract at residues 1–146 (MADDIDIEAM…PVREPIDNLT (146 aa)) is disordered. Alanine 2 is modified (N-acetylalanine). Residues 14 to 32 (PYKKDENKLSSANGHEERS) are compositionally biased toward basic and acidic residues. Composition is skewed to basic residues over residues 33–56 (KKRK…KERK) and 64–95 (KKSK…RGRY). At tyrosine 95 the chain carries Phosphotyrosine. A phosphoserine mark is found at serine 97 and serine 100. A Glycyl lysine isopeptide (Lys-Gly) (interchain with G-Cter in SUMO2) cross-link involves residue lysine 111. At serine 117 the chain carries Phosphoserine. Lysine 119 is covalently cross-linked (Glycyl lysine isopeptide (Lys-Gly) (interchain with G-Cter in SUMO2)). Residues 119–130 (KLSRRRSRSKSP) show a composition bias toward basic residues. 2 positions are modified to phosphoserine: serine 121 and serine 136. Residues 131 to 146 (FRKDKSPVREPIDNLT) show a composition bias toward basic and acidic residues. Threonine 146 is subject to Phosphothreonine. An RRM 1 domain is found at 153–230 (RTVFCMQLAA…VPIIVQASQA (78 aa)). Lysine 244 is covalently cross-linked (Glycyl lysine isopeptide (Lys-Gly) (interchain with G-Cter in SUMO2)). An RRM 2 domain is found at 250–328 (MRLYVGSLHF…RPMKVGHVTE (79 aa)). The activating domain stretch occupies residues 291-355 (KGYGFITFSD…RTGIDLGTTG (65 aa)). The segment at 291 to 400 (KGYGFITFSD…ADLQTRLSQQ (110 aa)) is interaction with JUN. Phosphoserine is present on residues serine 334, serine 337, and serine 341. An interaction with ESR1 and ESR2 region spans residues 355 to 400 (GRLQLMARLAEGTGLQIPPAAQQALQMSGSLAFGAVADLQTRLSQQ). An interaction with NCOA6 region spans residues 400–524 (QTEASALAAA…ATQLLVPSRR (125 aa)). Positions 439-502 (EIKDDVIEEC…KMITAAYVPL (64 aa)) constitute an RRM 3 domain.

Belongs to the splicing factor SR family. Interacts with NCOA6 and JUN. Interacts with ESR1 and ESR2, in the presence of estradiol (E2). Interacts with RSRC1 (via Arg/Ser-rich domain). Interacts with SF3B1. Interacts with ZNF106 (via N-terminus).

The protein localises to the nucleus speckle. Its function is as follows. RNA-binding protein that acts as a pre-mRNA splicing factor. Acts by promoting exon inclusion via regulation of exon cassette splicing. Also acts as a transcriptional coactivator for steroid nuclear receptors ESR1/ER-alpha and ESR2/ER-beta, and JUN/AP-1, independently of the pre-mRNA splicing factor activity. This is RNA-binding protein 39 (RBM39) from Pongo abelii (Sumatran orangutan).